Consider the following 976-residue polypeptide: DNA-directed RNA polymerase 1, mitochondrial (976 aa).

The transit peptide at 1 to 42 (MWRNILGRASLRKVKFLSDSSSSGTHYPVNRVRGILSSVNLS) directs the protein to the mitochondrion. Residues Asp-677, Lys-752, and Asp-909 contribute to the active site.

Belongs to the phage and mitochondrial RNA polymerase family.

The protein resides in the mitochondrion. The enzyme catalyses RNA(n) + a ribonucleoside 5'-triphosphate = RNA(n+1) + diphosphate. In terms of biological role, DNA-dependent RNA polymerase catalyzes the transcription of DNA into RNA using the four ribonucleoside triphosphates as substrates. The sequence is that of DNA-directed RNA polymerase 1, mitochondrial (RPOT1) from Arabidopsis thaliana (Mouse-ear cress).